Consider the following 424-residue polypeptide: Vasopressin V1b receptor (424 aa).

A disordered region spans residues 1-22 (MDSGPLWDANPTPRGTLSAPNA). Residues 1 to 35 (MDSGPLWDANPTPRGTLSAPNATTPWLGRDEELAK) lie on the Extracellular side of the membrane. Positions 13–22 (PRGTLSAPNA) are enriched in polar residues. N-linked (GlcNAc...) asparagine glycosylation is present at Asn21. The chain crosses the membrane as a helical span at residues 36 to 59 (VEIGVLATVLVLATGGNLAVLLTL). The Cytoplasmic segment spans residues 60 to 71 (GQLGRKRSRMHL). A helical membrane pass occupies residues 72–93 (FVLHLALTDLAVALFQVLPQLL). At 94–108 (WDITYRFQGPDLLCR) the chain is on the extracellular side. An intrachain disulfide couples Cys107 to Cys186. A helical transmembrane segment spans residues 109–130 (AVKYLQVLSMFASTYMLLAMTL). The Cytoplasmic portion of the chain corresponds to 131–151 (DRYLAVCHPLRSLQQPGQSTY). The helical transmembrane segment at 152-173 (LLIAAPWLLAAIFSLPQVFIFS) threads the bilayer. Over 174-201 (LREVIQGSGVLDCWADFGFPWGPRAYLT) the chain is Extracellular. A helical transmembrane segment spans residues 202 to 222 (WTTLAIFVLPVTMLTACYSLI). Residues 223-283 (CHEICKNLKV…RAKIRTVKMT (61 aa)) are Cytoplasmic-facing. The chain crosses the membrane as a helical span at residues 284–303 (FVIVLAYIACWAPFFSVQMW). The Extracellular portion of the chain corresponds to 304-321 (SVWDKNAPDEDSTNVAFT). A helical transmembrane segment spans residues 322 to 341 (ISMLLGNLNSCCNPWIYMGF). Residues 342–424 (NSHLLPRPLR…GEGTAETIIF (83 aa)) lie on the Cytoplasmic side of the membrane. The interval 398–417 (SGRPRPEESPRDLELADGEG) is disordered. The segment covering 401 to 411 (PRPEESPRDLE) has biased composition (basic and acidic residues).

Belongs to the G-protein coupled receptor 1 family. Vasopressin/oxytocin receptor subfamily.

It is found in the cell membrane. Its function is as follows. Receptor for arginine vasopressin. The activity of this receptor is mediated by G proteins which activate a phosphatidyl-inositol-calcium second messenger system. Functionally, (Microbial infection) During SARS coronavirus-2/SARS-CoV-2 infection, may recognize and internalize the complex formed by AVP/Arg-vasopressin, SARS-CoV-2 spike protein and secreted ACE2 through DNM2/dynamin 2-dependent endocytosis. The protein is Vasopressin V1b receptor of Homo sapiens (Human).